A 227-amino-acid chain; its full sequence is Cytidylate kinase (227 aa).

7–15 (GPSGAGKGT) is a binding site for ATP.

This sequence belongs to the cytidylate kinase family. Type 1 subfamily.

The protein localises to the cytoplasm. It catalyses the reaction CMP + ATP = CDP + ADP. The catalysed reaction is dCMP + ATP = dCDP + ADP. This chain is Cytidylate kinase, found in Actinobacillus succinogenes (strain ATCC 55618 / DSM 22257 / CCUG 43843 / 130Z).